A 35-amino-acid polypeptide reads, in one-letter code: Conotoxin Cal6.1f (35 aa).

A propeptide spanning residues 1 to 8 is cleaved from the precursor; it reads GLIRPSKR. Intrachain disulfides connect Cys9/Cys25, Cys16/Cys29, and Cys24/Cys34.

This sequence belongs to the conotoxin O1 superfamily. Expressed by the venom duct.

The protein localises to the secreted. Its function is as follows. Probable neurotoxin with unknown target. Possibly targets ion channels. This chain is Conotoxin Cal6.1f, found in Californiconus californicus (California cone).